A 291-amino-acid chain; its full sequence is Lipoyl synthase, organellar chromatophore (291 aa).

7 residues coordinate [4Fe-4S] cluster: C33, C38, C44, C59, C63, C66, and S274. The 219-residue stretch at F45–L263 folds into the Radical SAM core domain.

Belongs to the radical SAM superfamily. Lipoyl synthase family. It depends on [4Fe-4S] cluster as a cofactor.

It is found in the plastid. The protein localises to the organellar chromatophore. It carries out the reaction [[Fe-S] cluster scaffold protein carrying a second [4Fe-4S](2+) cluster] + N(6)-octanoyl-L-lysyl-[protein] + 2 oxidized [2Fe-2S]-[ferredoxin] + 2 S-adenosyl-L-methionine + 4 H(+) = [[Fe-S] cluster scaffold protein] + N(6)-[(R)-dihydrolipoyl]-L-lysyl-[protein] + 4 Fe(3+) + 2 hydrogen sulfide + 2 5'-deoxyadenosine + 2 L-methionine + 2 reduced [2Fe-2S]-[ferredoxin]. It functions in the pathway protein modification; protein lipoylation via endogenous pathway; protein N(6)-(lipoyl)lysine from octanoyl-[acyl-carrier-protein]: step 2/2. Catalyzes the radical-mediated insertion of two sulfur atoms into the C-6 and C-8 positions of the octanoyl moiety bound to the lipoyl domains of lipoate-dependent enzymes, thereby converting the octanoylated domains into lipoylated derivatives. The sequence is that of Lipoyl synthase, organellar chromatophore from Paulinella chromatophora.